The primary structure comprises 137 residues: MSGGFLDKVLNFMGFSEEEEEEYVEKEPAKKVRGKANLVALPGMSMLKMMVFEPRSFDEVQGIADSLKSGSPVVVNLERIDGELGRRIIDFLMGTTYALGGHLHKINPQIYLFAPQNVLIEGEMREFRDKTFFNPFK.

The protein belongs to the SepF family. As to quaternary structure, homodimer. Interacts with FtsZ.

The protein resides in the cytoplasm. Its function is as follows. Cell division protein that is part of the divisome complex and is recruited early to the Z-ring. Probably stimulates Z-ring formation, perhaps through the cross-linking of FtsZ protofilaments. Its function overlaps with FtsA. In Carboxydothermus hydrogenoformans (strain ATCC BAA-161 / DSM 6008 / Z-2901), this protein is Cell division protein SepF.